We begin with the raw amino-acid sequence, 489 residues long: 3-octaprenyl-4-hydroxybenzoate carboxy-lyase (489 aa).

Asn172 serves as a coordination point for Mn(2+). Prenylated FMN contacts are provided by residues Val175 to Arg177, Arg189 to Leu191, and Arg194 to Gly195. A Mn(2+)-binding site is contributed by Glu240. Asp288 serves as the catalytic Proton donor.

This sequence belongs to the UbiD family. Homohexamer. It depends on prenylated FMN as a cofactor. The cofactor is Mn(2+).

It is found in the cell membrane. The enzyme catalyses a 4-hydroxy-3-(all-trans-polyprenyl)benzoate + H(+) = a 2-(all-trans-polyprenyl)phenol + CO2. It participates in cofactor biosynthesis; ubiquinone biosynthesis. Catalyzes the decarboxylation of 3-octaprenyl-4-hydroxy benzoate to 2-octaprenylphenol, an intermediate step in ubiquinone biosynthesis. This is 3-octaprenyl-4-hydroxybenzoate carboxy-lyase from Wigglesworthia glossinidia brevipalpis.